Reading from the N-terminus, the 163-residue chain is Nucleotide-binding protein DET1318 (163 aa).

Belongs to the YajQ family.

Nucleotide-binding protein. This Dehalococcoides mccartyi (strain ATCC BAA-2266 / KCTC 15142 / 195) (Dehalococcoides ethenogenes (strain 195)) protein is Nucleotide-binding protein DET1318.